A 414-amino-acid polypeptide reads, in one-letter code: Putative transporter AmpG 4 (414 aa).

The next 12 membrane-spanning stretches (helical) occupy residues 15 to 35 (IFILGIVSGMPLVIIFSTLAV), 44 to 63 (IAVITTFAVARLSYSLKVFW), 84 to 104 (WLILCSSLMALVLIAMSKENP), 109 to 129 (TSFYFLTILLGFLSSTFDIAV), 150 to 170 (VFGYRIGMLITGAGALYLAEI), 177 to 197 (LTFCVIAIIFVVATIFIITVN), 230 to 250 (FAVTILLAVIFFKLGDAMLGA), 268 to 288 (IIAKLYGLIATLVGGFVGGIV), 295 to 315 (FKGLIITGIAQSLTHFAFIWL), 324 to 344 (ALLIAITIENFAAAMGATALV), 360 to 379 (YALLSSASSLCNNTVTIYAG), and 389 to 409 (GFFLFTIILALPALFILMYLN).

The protein belongs to the major facilitator superfamily.

Its subcellular location is the cell inner membrane. The polypeptide is Putative transporter AmpG 4 (ampG4) (Rickettsia conorii (strain ATCC VR-613 / Malish 7)).